The following is a 453-amino-acid chain: Gamma-aminobutyric acid receptor subunit alpha-6 (453 aa).

Residues 1–19 (MVLLLPWLFIILWLENAQA) form the signal peptide. Over 20-243 (QLEDEGNFYS…FHLQRKMGYF (224 aa)) the chain is Extracellular. Residue Asn-31 is glycosylated (N-linked (GlcNAc...) asparagine). Arg-84 contacts 4-aminobutanoate. N-linked (GlcNAc...) asparagine glycosylation is found at Asn-128 and Asn-141. Thr-147 contributes to the 4-aminobutanoate binding site. Cys-156 and Cys-170 are joined by a disulfide. The helical transmembrane segment at 244-264 (MIQIYTPCIMTVILSQVSFWI) threads the bilayer. At 265 to 270 (NKESVP) the chain is on the cytoplasmic side. The helical transmembrane segment at 271–290 (ARTVFGITTVLTMTTLSISA) threads the bilayer. Topologically, residues 291–304 (RHSLPKVSYATAMD) are extracellular. The helical transmembrane segment at 305-325 (WFIAVCFAFVFSALIEFAAVN) threads the bilayer. Residues 326–422 (YFTNLQSQKA…GTSKIDQYSR (97 aa)) are Cytoplasmic-facing. A Phosphoserine modification is found at Ser-375. The helical transmembrane segment at 423–443 (ILFPVAFAGFNLVYWIVYLSK) threads the bilayer. Residues 444-453 (DTMEVSSTVE) lie on the Extracellular side of the membrane.

It belongs to the ligand-gated ion channel (TC 1.A.9) family. Gamma-aminobutyric acid receptor (TC 1.A.9.5) subfamily. GABRA6 sub-subfamily. As to quaternary structure, heteropentamer, formed by a combination of alpha (GABRA1-6), beta (GABRB1-3), gamma (GABRG1-3), delta (GABRD), epsilon (GABRE), rho (GABRR1-3), pi (GABRP) and theta (GABRQ) chains, each subunit exhibiting distinct physiological and pharmacological properties. Binds UBQLN1. Expressed in brain, in cerebellar granule cells.

It is found in the postsynaptic cell membrane. The protein resides in the cell membrane. It catalyses the reaction chloride(in) = chloride(out). Alpha subunit of the heteropentameric ligand-gated chloride channel gated by gamma-aminobutyric acid (GABA), a major inhibitory neurotransmitter in the brain. GABA-gated chloride channels, also named GABA(A) receptors (GABAAR), consist of five subunits arranged around a central pore and contain GABA active binding site(s) located at the alpha and beta subunit interface(s). When activated by GABA, GABAARs selectively allow the flow of chloride anions across the cell membrane down their electrochemical gradient. Alpha-6/GABRA6 subunits are found at both synaptic and extrasynaptic sites. Chloride influx into the postsynaptic neuron following GABAAR opening decreases the neuron ability to generate a new action potential, thereby reducing nerve transmission. Extrasynaptic alpha-6-containing receptors contribute to the tonic GABAergic inhibition. Alpha-6 subunits are also present on glutamatergic synapses. This is Gamma-aminobutyric acid receptor subunit alpha-6 from Mus musculus (Mouse).